The following is a 276-amino-acid chain: Putative ABC transporter ATP-binding protein MA_4021 (276 aa).

One can recognise an ABC transporter domain in the interval 5–247; it reads FDLKNISYSY…DLNLLLSTNL (243 aa). An ATP-binding site is contributed by 38–45; the sequence is GSNGSGKS.

The protein belongs to the ABC transporter superfamily.

It is found in the cell membrane. Functionally, probably part of an ABC transporter complex. Responsible for energy coupling to the transport system. The polypeptide is Putative ABC transporter ATP-binding protein MA_4021 (Methanosarcina acetivorans (strain ATCC 35395 / DSM 2834 / JCM 12185 / C2A)).